A 293-amino-acid polypeptide reads, in one-letter code: Insulin-like growth factor-binding protein 3 (293 aa).

The N-terminal stretch at 1–27 (MQRARPALWAAALIALALLRGPPAARA) is a signal peptide. Residues 36-119 (PVVRCEPCDA…LDGRGICANA (84 aa)) enclose the IGFBP N-terminal domain. Intrachain disulfides connect C40/C69, C43/C71, C51/C72, C60/C75, C83/C96, and C90/C116. N118 and N138 each carry an N-linked (GlcNAc...) asparagine glycan. Disordered stretches follow at residues 132 to 166 (APPAPGNGSESEEDRSVDSMENQALPSTHRVPDSK) and 178 to 213 (KKGHAKDSQRYKVDYESQSTDTQNFSSESKRETEYG). S150 carries the post-translational modification Phosphoserine. Residues 178–192 (KKGHAKDSQRYKVDY) are compositionally biased toward basic and acidic residues. A compositionally biased stretch (polar residues) spans 193 to 204 (ESQSTDTQNFSS). N201 carries an N-linked (GlcNAc...) asparagine glycan. Position 203 is a phosphoserine (S203). The region spanning 212–287 (YGPCRREMED…DVKGKGDVHC (76 aa)) is the Thyroglobulin type-1 domain. 3 cysteine pairs are disulfide-bonded: C215/C242, C253/C264, and C266/C287.

In terms of assembly, interacts with XLKD1. Binds IGF2 more than IGF1. Forms a ternary complex of about 140 to 150 kDa with IGF1 or IGF2 and a 85 kDa glycoprotein (ALS). Interacts with humanin; humanin competes with importin KPNB1 for binding to IGFBP3, blocking IGFBP3 nuclear import and IGFBP3-mediated apoptosis. Interacts with TMEM219. Interacts with RXRA; this interaction modulates the transcriptional activity of RXRA. Interacts with LRP1; this interaction mediates cell growth inhibition independent of IGF1. Phosphorylated by FAM20C in the extracellular medium. Phosphorylated by CK2; resulting in decreased nuclear localization.

Its subcellular location is the secreted. The protein resides in the nucleus. Its function is as follows. Multifunctional protein that plays a critical role in regulating the availability of IGFs such as IGF1 and IGF2 to their receptors and thereby regulates IGF-mediated cellular processes including proliferation, differentiation, and apoptosis in a cell-type specific manner. Also exhibits IGF-independent antiproliferative and apoptotic effects mediated by its receptor TMEM219/IGFBP-3R. Inhibits the positive effect of humanin on insulin sensitivity. Promotes testicular germ cell apoptosis. Acts via LRP-1/alpha2M receptor, also known as TGF-beta type V receptor, to mediate cell growth inhibition independent of IGF1. Mechanistically, induces serine-specific dephosphorylation of IRS1 or IRS2 upon ligation to its receptor, leading to the inhibitory cascade. In the nucleus, interacts with transcription factors such as retinoid X receptor-alpha/RXRA to regulate transcriptional signaling and apoptosis. This Sus scrofa (Pig) protein is Insulin-like growth factor-binding protein 3 (IGFBP3).